Consider the following 187-residue polypeptide: Ribosome-recycling factor (187 aa).

It belongs to the RRF family.

The protein localises to the cytoplasm. Responsible for the release of ribosomes from messenger RNA at the termination of protein biosynthesis. May increase the efficiency of translation by recycling ribosomes from one round of translation to another. In Rhodopseudomonas palustris (strain BisA53), this protein is Ribosome-recycling factor.